A 241-amino-acid polypeptide reads, in one-letter code: Tetrahydromethanopterin S-methyltransferase subunit A (241 aa).

Residues 1-220 (MANKREPAPG…AKWQAGYYNG (220 aa)) lie on the Cytoplasmic side of the membrane. Residue His-85 coordinates 5-hydroxybenzimidazolylcob(I)amide. The chain crosses the membrane as a helical span at residues 221 to 241 (KIQGIATGLFLMLLIMGILMF).

This sequence belongs to the MtrA family. The complex is composed of 8 subunits; MtrA, MtrB, MtrC, MtrD, MtrE, MtrF, MtrG and MtrH. 5-hydroxybenzimidazolylcob(I)amide serves as cofactor.

Its subcellular location is the cell membrane. It catalyses the reaction 5-methyl-5,6,7,8-tetrahydromethanopterin + coenzyme M + 2 Na(+)(in) = 5,6,7,8-tetrahydromethanopterin + methyl-coenzyme M + 2 Na(+)(out). Its pathway is one-carbon metabolism; methanogenesis from CO(2); methyl-coenzyme M from 5,10-methylene-5,6,7,8-tetrahydromethanopterin: step 2/2. Functionally, part of a complex that catalyzes the formation of methyl-coenzyme M and tetrahydromethanopterin from coenzyme M and methyl-tetrahydromethanopterin. This is an energy-conserving, sodium-ion translocating step. The chain is Tetrahydromethanopterin S-methyltransferase subunit A from Methanocaldococcus jannaschii (strain ATCC 43067 / DSM 2661 / JAL-1 / JCM 10045 / NBRC 100440) (Methanococcus jannaschii).